The following is a 562-amino-acid chain: Phosphomethylpyrimidine synthase (562 aa).

Substrate is bound by residues Asn179, Met208, Tyr237, His273, 293–295, 334–337, and Glu373; these read SRG and DGLR. A Zn(2+)-binding site is contributed by His377. Residue Tyr400 coordinates substrate. Position 441 (His441) interacts with Zn(2+). Cys521, Cys524, and Cys529 together coordinate [4Fe-4S] cluster.

It belongs to the ThiC family. The cofactor is [4Fe-4S] cluster.

The catalysed reaction is 5-amino-1-(5-phospho-beta-D-ribosyl)imidazole + S-adenosyl-L-methionine = 4-amino-2-methyl-5-(phosphooxymethyl)pyrimidine + CO + 5'-deoxyadenosine + formate + L-methionine + 3 H(+). It participates in cofactor biosynthesis; thiamine diphosphate biosynthesis. Functionally, catalyzes the synthesis of the hydroxymethylpyrimidine phosphate (HMP-P) moiety of thiamine from aminoimidazole ribotide (AIR) in a radical S-adenosyl-L-methionine (SAM)-dependent reaction. This Geobacillus kaustophilus (strain HTA426) protein is Phosphomethylpyrimidine synthase.